Reading from the N-terminus, the 316-residue chain is Protoheme IX farnesyltransferase (316 aa).

A run of 9 helical transmembrane segments spans residues 28 to 48 (IIPLLLITTAAAMEIASKGQV), 50 to 70 (PLLLFLTLLGGTLAAAAAQTL), 99 to 119 (HALIFALVLASLSLALFVFFV), 122 to 142 (LSGFLAMTGIAFYMLIYTHLL), 150 to 170 (IVIGGAAGSIPPLVGWAAVTG), 178 to 198 (ILFAIIFLWTPPHFWALALMI), 223 to 243 (IWLYTLIVVPFTFLLIYPLAA), 244 to 264 (CGVVYGVAALVLGFVFLKKAW), and 293 to 313 (AMVIDSLPMTSHLIATIASLF).

Belongs to the UbiA prenyltransferase family. Protoheme IX farnesyltransferase subfamily.

The protein localises to the cell inner membrane. It catalyses the reaction heme b + (2E,6E)-farnesyl diphosphate + H2O = Fe(II)-heme o + diphosphate. The protein operates within porphyrin-containing compound metabolism; heme O biosynthesis; heme O from protoheme: step 1/1. Converts heme B (protoheme IX) to heme O by substitution of the vinyl group on carbon 2 of heme B porphyrin ring with a hydroxyethyl farnesyl side group. This is Protoheme IX farnesyltransferase from Microcystis aeruginosa (strain NIES-843 / IAM M-2473).